We begin with the raw amino-acid sequence, 348 residues long: MGQCYYNETIGFFYNNSGKELSSHWRPKDVVVVALGLTVSVLVLLTNLLVIAAIASNRRFHQPIYYLLGNLAAADLFAGVAYLFLMFHTGPRTARLSLEGWFLRQGLLDTSLTASVATLLAIAVERHRSVMAVQLHSRLPRGRVVMLIVGVWVAALGLGLLPAHSWHCLCALDRCSRMAPLLSRSYLAVWALSSLLVFLLMVAVYTRIFFYVRRRVQRMAEHVSCHPRYRETTLSLVKTVVIILGAFVVCWTPGQVVLLLDGLGCESCNVLAVEKYFLLLAEANSLVNAAVYSCRDAEMRRTFRRLLCCACLRQSTRESVHYTSSAQGGASTRIMLPENGHPLMDSTL.

The Extracellular portion of the chain corresponds to 1-30; it reads MGQCYYNETIGFFYNNSGKELSSHWRPKDV. 2 N-linked (GlcNAc...) asparagine glycosylation sites follow: N7 and N15. A helical membrane pass occupies residues 31 to 51; sequence VVVALGLTVSVLVLLTNLLVI. Residues 52 to 66 lie on the Cytoplasmic side of the membrane; that stretch reads AAIASNRRFHQPIYY. A helical membrane pass occupies residues 67–87; sequence LLGNLAAADLFAGVAYLFLMF. Residues 88–100 are Extracellular-facing; it reads HTGPRTARLSLEG. Residues 101–123 traverse the membrane as a helical segment; sequence WFLRQGLLDTSLTASVATLLAIA. The Cytoplasmic segment spans residues 124–143; it reads VERHRSVMAVQLHSRLPRGR. Residues 144-164 traverse the membrane as a helical segment; the sequence is VVMLIVGVWVAALGLGLLPAH. The Extracellular segment spans residues 165-185; it reads SWHCLCALDRCSRMAPLLSRS. The chain crosses the membrane as a helical span at residues 186 to 206; the sequence is YLAVWALSSLLVFLLMVAVYT. Over 207–239 the chain is Cytoplasmic; that stretch reads RIFFYVRRRVQRMAEHVSCHPRYRETTLSLVKT. The chain crosses the membrane as a helical span at residues 240-260; sequence VVIILGAFVVCWTPGQVVLLL. Residues 261-276 lie on the Extracellular side of the membrane; it reads DGLGCESCNVLAVEKY. The chain crosses the membrane as a helical span at residues 277 to 294; the sequence is FLLLAEANSLVNAAVYSC. Topologically, residues 295–348 are cytoplasmic; it reads RDAEMRRTFRRLLCCACLRQSTRESVHYTSSAQGGASTRIMLPENGHPLMDSTL. C308 carries the S-palmitoyl cysteine lipid modification. Positions 345–348 match the PDZ-binding motif; that stretch reads DSTL.

This sequence belongs to the G-protein coupled receptor 1 family. Interacts with SLC9A3R2/NHERF2, MAGI3 and PLCB3. Interacts with RALA and GRK2. Expressed most abundantly in testes and peripheral blood leukocytes with less expression in pancreas, spleen, thymus and prostate. Little or no expression in heart, brain, placenta, lung, liver, skeletal muscle, kidney, ovary, small intestine, or colon.

The protein localises to the cell surface. It is found in the cell membrane. Its function is as follows. Receptor for lysophosphatidic acid (LPA), a mediator of diverse cellular activities. Seems to be coupled to the G(i)/G(o), G(12)/G(13), and G(q) families of heteromeric G proteins. Plays a key role in phospholipase C-beta (PLC-beta) signaling pathway. Stimulates phospholipase C (PLC) activity in a manner that is independent of RALA activation. The protein is Lysophosphatidic acid receptor 2 of Homo sapiens (Human).